Here is a 310-residue protein sequence, read N- to C-terminus: GMP synthase [glutamine-hydrolyzing] subunit B (310 aa).

The 187-residue stretch at 1–187 folds into the GMPS ATP-PPase domain; that stretch reads MSTSSYIDQI…LGLRTDLQPF (187 aa). ATP is bound at residue 27–33; sequence SGGQDSS.

Heterodimer composed of a glutamine amidotransferase subunit (A) and a GMP-binding subunit (B).

The catalysed reaction is XMP + L-glutamine + ATP + H2O = GMP + L-glutamate + AMP + diphosphate + 2 H(+). The protein operates within purine metabolism; GMP biosynthesis; GMP from XMP (L-Gln route): step 1/1. In terms of biological role, catalyzes the synthesis of GMP from XMP. This is GMP synthase [glutamine-hydrolyzing] subunit B (guaAB) from Thermoplasma acidophilum (strain ATCC 25905 / DSM 1728 / JCM 9062 / NBRC 15155 / AMRC-C165).